The chain runs to 487 residues: Transcriptional adapter ADA2b (487 aa).

Over residues 1–13 (MGRSRGNFQNFED) the composition is skewed to polar residues. Residues 1–25 (MGRSRGNFQNFEDPTQRTRKKKNAA) form a disordered region. A ZZ-type zinc finger spans residues 42 to 98 (GGKYNCDYCQKDITGKIRIKCAVCPDFDLCIECMSVGAEITPHKCDHPYRVMGNLTF). Zn(2+) contacts are provided by Cys47, Cys50, Cys62, Cys65, Cys71, Cys74, His84, and His88. An SANT domain is found at 100 to 152 (LICPDWSADDEMLLLEGLEIYGLGNWAEVAEHVGTKSKEQCLEHYRNIYLNSP). Lys216 carries the post-translational modification N6-acetyllysine; by GCN5. The segment covering 368-383 (RKRKRENEEGMNRGKE) has biased composition (basic and acidic residues). Residues 368–388 (RKRKRENEEGMNRGKESGQFG) form a disordered region. The 87-residue stretch at 401 to 487 (QASSSYVNDL…MLVKKGIAQL (87 aa)) folds into the SWIRM domain.

In terms of assembly, interacts in vitro with the HAT domain of GCN5 and with the DNA-binding domain of the transcriptional activator DREB1B/CBF1. Interacts with BZIP11. Post-translationally, acetylated in vitro by GCN5, but acetylation is not essential for biological activity. In terms of tissue distribution, expressed in roots, leaves, stems, flowers and siliques, with the strongest activity in the meristematic zones.

The protein resides in the nucleus. Its function is as follows. Required for the function of some acidic activation domains, which activate transcription from a distant site. The exact mechanism of action is not yet known. ADA2 stimulates the acetyltransferase activity of GCN5 on free histones or nucleosomes, probably by opening up the promoter region. Mediates auxin and cytokinin signals in the control of cell proliferation and might be involved in repression of a freezing tolerance pathway at warm temperature. Involved in the positive regulation of salt-induced gene expression by maintaining locus-specific acetylation of histones H4 and H3. In Arabidopsis thaliana (Mouse-ear cress), this protein is Transcriptional adapter ADA2b (ADA2B).